The primary structure comprises 154 residues: SsrA-binding protein (154 aa).

This sequence belongs to the SmpB family.

The protein resides in the cytoplasm. In terms of biological role, required for rescue of stalled ribosomes mediated by trans-translation. Binds to transfer-messenger RNA (tmRNA), required for stable association of tmRNA with ribosomes. tmRNA and SmpB together mimic tRNA shape, replacing the anticodon stem-loop with SmpB. tmRNA is encoded by the ssrA gene; the 2 termini fold to resemble tRNA(Ala) and it encodes a 'tag peptide', a short internal open reading frame. During trans-translation Ala-aminoacylated tmRNA acts like a tRNA, entering the A-site of stalled ribosomes, displacing the stalled mRNA. The ribosome then switches to translate the ORF on the tmRNA; the nascent peptide is terminated with the 'tag peptide' encoded by the tmRNA and targeted for degradation. The ribosome is freed to recommence translation, which seems to be the essential function of trans-translation. The sequence is that of SsrA-binding protein from Enterococcus faecalis (strain ATCC 700802 / V583).